A 444-amino-acid chain; its full sequence is Enolase 2 (444 aa).

Substrate is bound by residues His165 and Glu174. Glu217 acts as the Proton donor in catalysis. Asp252, Glu303, and Asp330 together coordinate Mg(2+). Residues Glu303 and Asp330 each coordinate substrate. Residue Lys355 is the Proton acceptor of the active site. Residues 382–385 (SHRS) and Lys406 each bind substrate.

It belongs to the enolase family. In terms of assembly, homodimer. Mg(2+) is required as a cofactor.

Its subcellular location is the cytoplasm. The enzyme catalyses (2R)-2-phosphoglycerate = phosphoenolpyruvate + H2O. It participates in carbohydrate degradation; glycolysis; pyruvate from D-glyceraldehyde 3-phosphate: step 4/5. The chain is Enolase 2 (ENO2) from Toxoplasma gondii.